Consider the following 108-residue polypeptide: Glutaredoxin-1 (108 aa).

The 104-residue stretch at 3–106 folds into the Glutaredoxin domain; the sequence is EEFVQQRLAN…DILLSIGVLR (104 aa). Cysteines 23 and 26 form a disulfide.

It belongs to the glutaredoxin family.

It localises to the virion. Functionally, displays thioltransferase and dehydroascorbate reductase activities. In Cynomys gunnisoni (Gunnison's prairie dog), this protein is Glutaredoxin-1 (OPG075).